The following is a 416-amino-acid chain: Serine hydroxymethyltransferase 1 (416 aa).

(6S)-5,6,7,8-tetrahydrofolate-binding positions include L121 and 125 to 127 (GHL). K229 is subject to N6-(pyridoxal phosphate)lysine. Residues E245 and 354 to 356 (SPF) each bind (6S)-5,6,7,8-tetrahydrofolate.

The protein belongs to the SHMT family. In terms of assembly, homodimer. It depends on pyridoxal 5'-phosphate as a cofactor.

Its subcellular location is the cytoplasm. The enzyme catalyses (6R)-5,10-methylene-5,6,7,8-tetrahydrofolate + glycine + H2O = (6S)-5,6,7,8-tetrahydrofolate + L-serine. It participates in one-carbon metabolism; tetrahydrofolate interconversion. The protein operates within amino-acid biosynthesis; glycine biosynthesis; glycine from L-serine: step 1/1. Catalyzes the reversible interconversion of serine and glycine with tetrahydrofolate (THF) serving as the one-carbon carrier. This reaction serves as the major source of one-carbon groups required for the biosynthesis of purines, thymidylate, methionine, and other important biomolecules. Also exhibits THF-independent aldolase activity toward beta-hydroxyamino acids, producing glycine and aldehydes, via a retro-aldol mechanism. The protein is Serine hydroxymethyltransferase 1 of Vibrio parahaemolyticus serotype O3:K6 (strain RIMD 2210633).